A 753-amino-acid chain; its full sequence is MGKAQSKRSIDITTDPKKVGEGDEVAGKVEKIDVDQKTDAPAVNGDAATPKEGGDEAAAVEKKETEEHSENDKDLTTEKSAAVAEGGDAVAETAKGEEGSPKEAAAGEDITPLADESIKSKSKKDKVKKKWSFRSISFGKKDKQKPAKSEEATSPTSGTTSPTTAEAEAAPAGDAAVAEPSVATNGEAEKPAETATATSEPASKDEKPAENGSATEQEKQANGETEKAAPAPSTVEEAAKPKPAEEPATVTATESNTTATEEVPVKESQPEPEVVTNGHGAGEALTNGSSNGLAESPVTETAPVADNIPSNVDDEPPHQNGTNGTTTPPPTPVATEIEKGQQIEASSEVIETVTPSQAEEEVVAAIIKAVSSEPEAETETETEAEGFVLVAPVSTEVEVPVSISPIEPVAEVSQVKIEPLVEIPEVEAKSVADVSEADTESVPKVSELKTEVSEIEFESVIVETRSSSPPPPLPKSPPPSRVSAFVLSEDVIEEQVTPNVPEVNDVKPDEIEQQAISIVAEITEQAAEIVTEQEKQQEEAKVDSVPETIEESSSTVVVEEVLPVQNDEVTAPSPTPDDVQKPIEDQDTPDEKESYPVPDPIDPAAVNDEVAVTEAVDCEVEKETGSISSNVAESSSVSDEQAAIENQVEILEEQTVAVEETTEQETSDQQVISEEAHSDNDKENEIDLVENIISDLDAPITKAGGDLLVELDARSAEQEGESNNKVDLAKDLKEKNAAAADVTTQEQLPVTCE.

Disordered regions lie at residues 1-345 (MGKA…QIEA), 462-482 (VETRSSSPPPPLPKSPPPSRV), 531-604 (TEQE…IDPA), 620-641 (VEKETGSISSNVAESSSVSDEQ), and 658-684 (VEETTEQETSDQQVISEEAHSDNDKEN). G2 carries the N-myristoyl glycine lipid modification. Composition is skewed to basic and acidic residues over residues 8–38 (RSIDITTDPKKVGEGDEVAGKVEKIDVDQKT) and 59–77 (AVEKKETEEHSENDKDLTT). Low complexity predominate over residues 81-93 (AAVAEGGDAVAET). Residues 119-148 (KSKSKKDKVKKKWSFRSISFGKKDKQKPAK) are F-actin binding. The segment covering 120-132 (SKSKKDKVKKKWS) has biased composition (basic residues). Residues S132, S135, and S137 each carry the phosphoserine modification. Over residues 139–151 (GKKDKQKPAKSEE) the composition is skewed to basic and acidic residues. Residues 152–181 (ATSPTSGTTSPTTAEAEAAPAGDAAVAEPS) are compositionally biased toward low complexity. The segment covering 216–227 (EQEKQANGETEK) has biased composition (basic and acidic residues). Over residues 246–262 (EPATVTATESNTTATEE) the composition is skewed to low complexity. The interaction with PKA-R2 stretch occupies residues 345-725 (ASSEVIETVT…AEQEGESNNK (381 aa)). Over residues 468-480 (SPPPPLPKSPPPS) the composition is skewed to pro residues. A compositionally biased stretch (basic and acidic residues) spans 532-544 (EQEKQQEEAKVDS). Residues 545–561 (VPETIEESSSTVVVEEV) are compositionally biased toward low complexity. Over residues 578 to 594 (DVQKPIEDQDTPDEKES) the composition is skewed to basic and acidic residues. Residues 626–638 (SISSNVAESSSVS) show a composition bias toward low complexity. Basic and acidic residues predominate over residues 674–684 (EEAHSDNDKEN).

As to quaternary structure, homodimer. Interacts with Cam; interaction is calcium-dependent and is inhibited by PKC-mediated phosphorylation of Akap200. Interacts with N/Notch; the interaction stabilizes N/Notch protein levels by preventing Cbl-mediated ubiquitination and subsequent lysosomal degradation of N/Notch. Interacts with Pka-R2. Binds to F-actin; interaction is independent of myristoylation, but is inhibited by Akap200 phosphorylation and Cam binding. Isoform B: Does not bind to Pka-R2. In terms of processing, myristoylated; myristoylation promotes accumulation at the cell periphery. Phosphorylated; phosphorylation prevents binding to F-actin and Cam. In terms of tissue distribution, detected in the brain in both neurons and glia (including perineurial glia); specifically in the neuronal nuclei in the cortex and synaptic neuropil (at protein level). Detected in germline cells, somatic follicle cells and outer rim of the ring canals during oogenesis (at protein level). Isoform A: Detected in the adult (at protein level). Isoform B: Detected in the adult with higher levels in the head (at protein level).

The protein localises to the cytoplasm. It is found in the cytosol. Its subcellular location is the cell membrane. It localises to the cytoskeleton. In terms of biological role, scaffolding protein involved in the regulation of PKA signaling and anchoring to the actin cytoskeleton integrating signals propagated by cAMP, diacylglycerol and calcium. Contributes to the maintenance and regulation of cytoskeletal structures in germline via PKA-mediated signaling. As part of ethanol response in the glia, mediates ethanol-induced structural remodeling of actin cytoskeleton and perineurial membrane topology by anchoring PKA to the membrane of perineurial glia. In specific tissues such as eye and thorax, promotes N/Notch protein stability by inhibiting Cbl-mediated ubiquitination and lysosomal degradation pathway of N/Notch in a PKA-independent way. In the circadian brain neurons evening cells (E-cells), might have a role in circadian pacemaker synchronization by playing a redundant role in signaling downstream of the G protein-couple receptor Pdfr. The protein is A-kinase anchor protein 200 of Drosophila melanogaster (Fruit fly).